The primary structure comprises 297 residues: Probable GTP 3',8-cyclase (297 aa).

Residues 4–220 (EFGREIRSFR…VVTRKFMQNR (217 aa)) enclose the Radical SAM core domain. Arginine 13 serves as a coordination point for GTP. [4Fe-4S] cluster-binding residues include cysteine 20 and cysteine 24. Tyrosine 26 is an S-adenosyl-L-methionine binding site. Position 27 (cysteine 27) interacts with [4Fe-4S] cluster. Lysine 61 is a binding site for GTP. Glycine 65 lines the S-adenosyl-L-methionine pocket. Threonine 91 is a GTP binding site. Serine 115 lines the S-adenosyl-L-methionine pocket. Lysine 151 serves as a coordination point for GTP. Cysteine 242 and cysteine 245 together coordinate [4Fe-4S] cluster. 247–249 (RIR) serves as a coordination point for GTP. Cysteine 259 lines the [4Fe-4S] cluster pocket.

Belongs to the radical SAM superfamily. MoaA family. [4Fe-4S] cluster is required as a cofactor.

The catalysed reaction is GTP + AH2 + S-adenosyl-L-methionine = (8S)-3',8-cyclo-7,8-dihydroguanosine 5'-triphosphate + 5'-deoxyadenosine + L-methionine + A + H(+). Its pathway is cofactor biosynthesis; molybdopterin biosynthesis. In terms of biological role, catalyzes the cyclization of GTP to (8S)-3',8-cyclo-7,8-dihydroguanosine 5'-triphosphate. The chain is Probable GTP 3',8-cyclase from Methanococcus vannielii (strain ATCC 35089 / DSM 1224 / JCM 13029 / OCM 148 / SB).